A 308-amino-acid chain; its full sequence is Methionyl-tRNA formyltransferase (308 aa).

111–114 (SLLP) contributes to the (6S)-5,6,7,8-tetrahydrofolate binding site.

This sequence belongs to the Fmt family.

The enzyme catalyses L-methionyl-tRNA(fMet) + (6R)-10-formyltetrahydrofolate = N-formyl-L-methionyl-tRNA(fMet) + (6S)-5,6,7,8-tetrahydrofolate + H(+). Its function is as follows. Attaches a formyl group to the free amino group of methionyl-tRNA(fMet). The formyl group appears to play a dual role in the initiator identity of N-formylmethionyl-tRNA by promoting its recognition by IF2 and preventing the misappropriation of this tRNA by the elongation apparatus. The chain is Methionyl-tRNA formyltransferase from Thermodesulfovibrio yellowstonii (strain ATCC 51303 / DSM 11347 / YP87).